The primary structure comprises 699 residues: Elongation factor G (699 aa).

Positions Glu8–Val290 constitute a tr-type G domain. Residues Ala17–Thr24, Asp88–His92, and Asn142–Asp145 each bind GTP.

Belongs to the TRAFAC class translation factor GTPase superfamily. Classic translation factor GTPase family. EF-G/EF-2 subfamily.

It localises to the cytoplasm. Functionally, catalyzes the GTP-dependent ribosomal translocation step during translation elongation. During this step, the ribosome changes from the pre-translocational (PRE) to the post-translocational (POST) state as the newly formed A-site-bound peptidyl-tRNA and P-site-bound deacylated tRNA move to the P and E sites, respectively. Catalyzes the coordinated movement of the two tRNA molecules, the mRNA and conformational changes in the ribosome. In Acidithiobacillus ferrooxidans (strain ATCC 23270 / DSM 14882 / CIP 104768 / NCIMB 8455) (Ferrobacillus ferrooxidans (strain ATCC 23270)), this protein is Elongation factor G.